A 157-amino-acid chain; its full sequence is Ribosomal RNA large subunit methyltransferase H (157 aa).

S-adenosyl-L-methionine contacts are provided by residues Leu73, Gly105, and 124–129 (LSKMTF).

Belongs to the RNA methyltransferase RlmH family. Homodimer.

It is found in the cytoplasm. The enzyme catalyses pseudouridine(1915) in 23S rRNA + S-adenosyl-L-methionine = N(3)-methylpseudouridine(1915) in 23S rRNA + S-adenosyl-L-homocysteine + H(+). Its function is as follows. Specifically methylates the pseudouridine at position 1915 (m3Psi1915) in 23S rRNA. The protein is Ribosomal RNA large subunit methyltransferase H of Christiangramia forsetii (strain DSM 17595 / CGMCC 1.15422 / KT0803) (Gramella forsetii).